A 1700-amino-acid polypeptide reads, in one-letter code: Ras-responsive element-binding protein 1 (1700 aa).

Positions 31 to 63 are disordered; sequence TENGGSPQGIKSPMKPPGPNRIGRRNQETKEEK. A phosphoserine mark is found at serine 36 and serine 42. 3 consecutive C2H2-type zinc fingers follow at residues 66 to 88, 97 to 119, and 125 to 147; these read YNCP…IRQH, HACS…MLVH, and YKCT…MKIH. The interval 146–195 is disordered; it reads IHEKDTNSTTAAAPPSPLKRRRLSSKRKLSHDAESEDPGPAKKMVEDGQS. Serine 161 carries the phosphoserine modification. The span at 163–174 shows a compositional bias: basic residues; the sequence is LKRRRLSSKRKL. Phosphoserine occurs at positions 175 and 180. The segment covering 184–195 has biased composition (basic and acidic residues); sequence GPAKKMVEDGQS. The segment at 206–228 adopts a C2H2-type 4 zinc-finger fold; it reads FHCPVCFKEFVCKYELETHMETH. Serine 229 carries the post-translational modification Phosphoserine. C2H2-type zinc fingers lie at residues 233-256 and 314-336; these read LRCD…ALVH and FVCD…RQSH. Residues lysine 433, lysine 500, lysine 549, lysine 564, lysine 591, and lysine 611 each participate in a glycyl lysine isopeptide (Lys-Gly) (interchain with G-Cter in SUMO2) cross-link. Lysine 613 is covalently cross-linked (Glycyl lysine isopeptide (Lys-Gly) (interchain with G-Cter in SUMO1); alternate). Residue lysine 613 forms a Glycyl lysine isopeptide (Lys-Gly) (interchain with G-Cter in SUMO2); alternate linkage. Lysine 622 is covalently cross-linked (Glycyl lysine isopeptide (Lys-Gly) (interchain with G-Cter in SUMO2)). 5 C2H2-type zinc fingers span residues 641–663, 669–691, 697–720, 751–782, and 788–813; these read YPCR…VRSH, YQCN…IRTH, YICK…RKKH, TVCR…GGCH, and FECK…QHLH. Residues lysine 855, lysine 883, and lysine 911 each participate in a glycyl lysine isopeptide (Lys-Gly) (interchain with G-Cter in SUMO2) cross-link. Disordered stretches follow at residues 939–991 and 1092–1177; these read IPKS…SLET and ADPG…AVDL. Over residues 944–961 the composition is skewed to basic and acidic residues; it reads KKGDKDTVVPSDAKKPEP. Serine 970 carries the phosphoserine modification. The segment covering 1097-1111 has biased composition (polar residues); it reads SITSSNTVATDSPGS. Residues serine 1125, serine 1137, and serine 1138 each carry the phosphoserine modification. The segment covering 1137-1146 has biased composition (low complexity); sequence SSPEEALPTE. Over residues 1155 to 1165 the composition is skewed to basic residues; it reads SRKRGRKRGLR. Serine 1172, serine 1179, serine 1180, and serine 1230 each carry phosphoserine. 4 disordered regions span residues 1195 to 1235, 1273 to 1368, 1383 to 1521, and 1564 to 1670; these read TNKF…AEDR, HTDS…QSLD, SEAG…RKKV, and VRHQ…SPAA. The C2H2-type 12 zinc finger occupies 1251–1273; it reads INCPHCPRVFPWASSLQRHMLTH. The span at 1273-1285 shows a compositional bias: low complexity; sequence HTDSQSDTDTLTT. A compositionally biased stretch (acidic residues) spans 1327-1346; it reads SEEEEEKETEENPEPEEECR. A C2H2-type 13 zinc finger spans residues 1400 to 1422; that stretch reads HACDTCGKNFKFLGTLSRHKKAH. A phosphoserine mark is found at serine 1450 and serine 1452. Positions 1492 to 1507 are enriched in basic and acidic residues; that stretch reads TAEKRGDGDKRPKTDS. C2H2-type zinc fingers lie at residues 1520-1542 and 1548-1570; these read KVCS…MRSH and YKCQ…QRIH. Basic residues predominate over residues 1564 to 1580; that stretch reads VRHQRIHQKARHSKHHG. 2 positions are modified to phosphoserine: serine 1593 and serine 1606. Over residues 1645-1660 the composition is skewed to low complexity; sequence AEQAAEPSAPKEQASP. Serine 1667 is modified (phosphoserine).

The protein belongs to the krueppel C2H2-type zinc-finger protein family. Interacts with NEUROD1. Interacts with AR. In terms of tissue distribution, expressed in splenic B-cells.

The protein resides in the nucleus speckle. Functionally, transcription factor that binds specifically to the RAS-responsive elements (RRE) of gene promoters. Represses the angiotensinogen gene. Negatively regulates the transcriptional activity of AR. Potentiates the transcriptional activity of NEUROD1. Binds specifically to the allelic variant of the CDKN2A promoter present in Balb/c mice, which leads to a down-regulation of CDKN2A expression in this strain, and, as a consequence, to an elevated susceptibility to pristane-induced tumors. Promotes brown adipocyte differentiation. May be involved in Ras/Raf-mediated cell differentiation by enhancing calcitonin expression. The polypeptide is Ras-responsive element-binding protein 1 (Rreb1) (Mus musculus (Mouse)).